A 325-amino-acid chain; its full sequence is MSIGDEVIPTVDISAWLSSTASPESKNKVVEEVRSACNKYGFFNLVGHGIPAEAREKIFGCTKKFFDLPLEEKMKISVDKSLGKSFRGYEPSLIQTHQDGLLPDTKECFITGAEIPADHPDAGKFSTGPNLWPEGLSDKEFRQPVMEYRALMLDLVSTIVRILGQGIHKAFGHPSDVLNDILINPSIPMRLLHYAPQENPDPRQFGVGDHTDFGCVSILLQQKGTKGLEVWYPPKETWIPVPVIEDAFVINMGDTMHRWTGGYYRSARHRVYITGERRYSVAFFLNGNLNLKIKPLDGSGGEASVGEHINSRLAHTLGDNAKYLR.

The region spanning 185–287 (PSIPMRLLHY…RYSVAFFLNG (103 aa)) is the Fe2OG dioxygenase domain. Fe cation-binding residues include histidine 210, aspartate 212, and histidine 269. Arginine 278 lines the 2-oxoglutarate pocket.

It belongs to the iron/ascorbate-dependent oxidoreductase family. The cofactor is Fe(2+).

The protein operates within secondary metabolite biosynthesis. Functionally, 2-oxoglutarate-dependent dioxygenase; part of the gene cluster that mediates the biosynthesis of the tropolone class of fungal maleic anhydrides. The pathway begins with the synthesis of 3-methylorcinaldehyde by the non-reducing polyketide synthase (PKS) tropA. 3-methylorcinaldehyde is the substrate for the FAD-dependent monooxygenase tropB to yield a dearomatized hydroxycyclohexadione. The 2-oxoglutarate-dependent dioxygenase tropC then performs the oxidative ring expansion to provide the first tropolone metabolite stipitaldehyde. Trop D converts stipitaldehyde into stipitacetal which is in turn converted to stipitalide by the short-chain dehydrogenase/reductase tropE. The next steps involve tropF, tropG, tropH, tropI and tropJ to form successive tropolone maleic anhydrides including stipitaldehydic, stipitatonic and stipitatic acids. This chain is 2-oxoglutarate-dependent dioxygenase tropC, found in Talaromyces stipitatus (strain ATCC 10500 / CBS 375.48 / QM 6759 / NRRL 1006) (Penicillium stipitatum).